Reading from the N-terminus, the 823-residue chain is MTQLQISLLLTATISLLHLVVATPYEAYPIGKQYPPVARVNESFTFQISNDTYKSSVDKTAQITYNCFDLPSWLSFDSSSRTFSGEPSSDLLSDANTTLYFNVILEGTDSADSTSLNNTYQFVVTNRPSISLSSDFNLLALLKNYGYTNGKNALKLDPNEVFNVTFDRSMFTNEESIVSYYGRSQLYNAPLPNWLFFDSGELKFTGTAPVINSAIAPETSYSFVIIATDIEGFSAVEVEFELVIGAHQLTTSIQNSLIINVTDTGNVSYDLPLNYVYLDDDPISSDKLGSINLLDAPDWVALDNATISGSVPDELLGKNSNPANFSVSIYDTYGDVIYFNFEVVSTTDLFAISSLPNINATRGEWFSYYFLPSQFTDYVNTNVSLEFTNSSQDHDWVKFQSSNLTLAGEVPKNFDKLSLGLKANQGSQSQELYFNIIGMDSKITHSNHSANATSTRSSHHSTSTSSYTSSTYTAKISSTSAAATSSAPAALPAANKTSSHNKKAVAIACGVAIPLGVILVALICFLIFWRRRRENPDDENLPHAISGPDLNNPANKPNQENATPLNNPFDDDASSYDDTSIARRLAALNTLKLDNHSATESDISSVDEKRDSLSGMNTYNDQFQSQSKEELLAKPPVQPPESPFFDPQNRSSSVYMDSEPAVNKSWRYTGNLSPVSDIVRDSYGSQKTVDTEKLFDLEAPEKEKRTSRDVTMSSLDPWNSNISPSPVRKSVTPSPYNVTKHRNRHLQNIQDSQSGKNGITPTTMSTSSSDDFVPVKDGENFCWVHSMEPDRRPSKKRLVDFSNKSNVNVGQVKDIHGRIPEML.

An N-terminal signal peptide occupies residues 1–22 (MTQLQISLLLTATISLLHLVVA). Residues 23–508 (TPYEAYPIGK…SHNKKAVAIA (486 aa)) lie on the Extracellular side of the membrane. Residues asparagine 41, asparagine 50, asparagine 96, asparagine 117, asparagine 163, asparagine 260, asparagine 266, asparagine 304, asparagine 324, asparagine 359, asparagine 382, asparagine 389, asparagine 403, asparagine 447, asparagine 451, and asparagine 495 are each glycosylated (N-linked (GlcNAc...) asparagine). The tract at residues 447–467 (NHSANATSTRSSHHSTSTSSY) is disordered. The span at 449-467 (SANATSTRSSHHSTSTSSY) shows a compositional bias: low complexity. The chain crosses the membrane as a helical span at residues 509 to 529 (CGVAIPLGVILVALICFLIFW). The Cytoplasmic portion of the chain corresponds to 530–823 (RRRRENPDDE…DIHGRIPEML (294 aa)). Disordered stretches follow at residues 539–576 (ENLP…ASSY) and 596–627 (HSAT…QSQS). Composition is skewed to polar residues over residues 552 to 566 (NPAN…TPLN) and 614 to 626 (SGMN…FQSQ). Serine 642, serine 673, and serine 676 each carry phosphoserine. Disordered stretches follow at residues 700–734 (PEKE…VTPS) and 751–771 (DSQS…SSDD). The segment covering 709-724 (DVTMSSLDPWNSNISP) has biased composition (polar residues). A compositionally biased stretch (low complexity) spans 760 to 769 (TPTTMSTSSS).

As to quaternary structure, interacts with BEM1, BUD3, BUD4, BUD5, CDC24 and CDC42. Post-translationally, O-glycosylated by PMT4 and N-glycosylated. O-glycosylation increases activity in daughter cells by enhancing stability and promoting localization to the plasma membrane. May also be O-glycosylated by PMT1 and PMT2.

It is found in the cell membrane. Required for haploid cells axial budding pattern. Acts as an anchor to help direct new growth components and/or polarity establishment components like the BUD5 GTP/GDP exchange factor to localize at the cortical axial budding site. Regulates septin organization in late G1 independently of its role in polarity-axis determination. In Saccharomyces cerevisiae (strain ATCC 204508 / S288c) (Baker's yeast), this protein is Axial budding pattern protein 2 (AXL2).